Reading from the N-terminus, the 1579-residue chain is DNA-directed RNA polymerase subunit beta' (1579 aa).

Positions 65, 67, 80, and 83 each coordinate Zn(2+). 3 residues coordinate Mg(2+): Asp601, Asp603, and Asp605. Zn(2+) is bound by residues Cys938, Cys1012, Cys1019, and Cys1022.

The protein belongs to the RNA polymerase beta' chain family. The RNAP catalytic core consists of 2 alpha, 1 beta, 1 beta' and 1 omega subunit. When a sigma factor is associated with the core the holoenzyme is formed, which can initiate transcription. Requires Mg(2+) as cofactor. It depends on Zn(2+) as a cofactor.

It catalyses the reaction RNA(n) + a ribonucleoside 5'-triphosphate = RNA(n+1) + diphosphate. Its function is as follows. DNA-dependent RNA polymerase catalyzes the transcription of DNA into RNA using the four ribonucleoside triphosphates as substrates. The chain is DNA-directed RNA polymerase subunit beta' from Sulfurihydrogenibium sp. (strain YO3AOP1).